Consider the following 483-residue polypeptide: Protein nucleotidyltransferase YdiU (483 aa).

8 residues coordinate ATP: G81, G83, R84, K103, D115, G116, R166, and R173. D244 (proton acceptor) is an active-site residue. Residues N245 and D254 each contribute to the Mg(2+) site. D254 contributes to the ATP binding site.

This sequence belongs to the SELO family. Mg(2+) is required as a cofactor. The cofactor is Mn(2+).

It carries out the reaction L-seryl-[protein] + ATP = 3-O-(5'-adenylyl)-L-seryl-[protein] + diphosphate. The catalysed reaction is L-threonyl-[protein] + ATP = 3-O-(5'-adenylyl)-L-threonyl-[protein] + diphosphate. It catalyses the reaction L-tyrosyl-[protein] + ATP = O-(5'-adenylyl)-L-tyrosyl-[protein] + diphosphate. The enzyme catalyses L-histidyl-[protein] + UTP = N(tele)-(5'-uridylyl)-L-histidyl-[protein] + diphosphate. It carries out the reaction L-seryl-[protein] + UTP = O-(5'-uridylyl)-L-seryl-[protein] + diphosphate. The catalysed reaction is L-tyrosyl-[protein] + UTP = O-(5'-uridylyl)-L-tyrosyl-[protein] + diphosphate. In terms of biological role, nucleotidyltransferase involved in the post-translational modification of proteins. It can catalyze the addition of adenosine monophosphate (AMP) or uridine monophosphate (UMP) to a protein, resulting in modifications known as AMPylation and UMPylation. This Shewanella halifaxensis (strain HAW-EB4) protein is Protein nucleotidyltransferase YdiU.